The following is a 92-amino-acid chain: YcgL domain-containing protein Sama_1929 (92 aa).

One can recognise a YcgL domain in the interval methionine 1–arginine 85.

This Shewanella amazonensis (strain ATCC BAA-1098 / SB2B) protein is YcgL domain-containing protein Sama_1929.